Here is an 89-residue protein sequence, read N- to C-terminus: Myrmicitoxin(1)-Pr2a (89 aa).

The signal sequence occupies residues Met1 to Ala23. The propeptide occupies Thr24 to Pro61. Asn88 is subject to Asparagine amide.

It belongs to the formicidae venom clade 1 family. In terms of tissue distribution, expressed by the venom gland.

It is found in the secreted. Its function is as follows. Vertebrate-selective toxin that causes pain by targeting voltage-gated sodium channels. This chain is Myrmicitoxin(1)-Pr2a, found in Pogonomyrmex rugosus (Desert harvester ant).